We begin with the raw amino-acid sequence, 213 residues long: Imidazole glycerol phosphate synthase subunit HisH 1 (213 aa).

The Glutamine amidotransferase type-1 domain occupies 4–213 (TVAVIDYGMG…QNFVAWDGRW (210 aa)). The active-site Nucleophile is the cysteine 82. Active-site residues include histidine 191 and glutamate 193.

Heterodimer of HisH and HisF.

Its subcellular location is the cytoplasm. It catalyses the reaction 5-[(5-phospho-1-deoxy-D-ribulos-1-ylimino)methylamino]-1-(5-phospho-beta-D-ribosyl)imidazole-4-carboxamide + L-glutamine = D-erythro-1-(imidazol-4-yl)glycerol 3-phosphate + 5-amino-1-(5-phospho-beta-D-ribosyl)imidazole-4-carboxamide + L-glutamate + H(+). The enzyme catalyses L-glutamine + H2O = L-glutamate + NH4(+). It functions in the pathway amino-acid biosynthesis; L-histidine biosynthesis; L-histidine from 5-phospho-alpha-D-ribose 1-diphosphate: step 5/9. Functionally, IGPS catalyzes the conversion of PRFAR and glutamine to IGP, AICAR and glutamate. The HisH subunit provides the glutamine amidotransferase activity that produces the ammonia necessary to HisF for the synthesis of IGP and AICAR. The polypeptide is Imidazole glycerol phosphate synthase subunit HisH 1 (hisH1) (Pseudomonas aeruginosa (strain ATCC 15692 / DSM 22644 / CIP 104116 / JCM 14847 / LMG 12228 / 1C / PRS 101 / PAO1)).